The chain runs to 464 residues: 3-isopropylmalate dehydratase large subunit (464 aa).

Cys337, Cys397, and Cys400 together coordinate [4Fe-4S] cluster.

This sequence belongs to the aconitase/IPM isomerase family. LeuC type 1 subfamily. Heterodimer of LeuC and LeuD. [4Fe-4S] cluster serves as cofactor.

The enzyme catalyses (2R,3S)-3-isopropylmalate = (2S)-2-isopropylmalate. The protein operates within amino-acid biosynthesis; L-leucine biosynthesis; L-leucine from 3-methyl-2-oxobutanoate: step 2/4. Functionally, catalyzes the isomerization between 2-isopropylmalate and 3-isopropylmalate, via the formation of 2-isopropylmaleate. The sequence is that of 3-isopropylmalate dehydratase large subunit from Bacillus mycoides (strain KBAB4) (Bacillus weihenstephanensis).